Reading from the N-terminus, the 45-residue chain is CQMVERGLDAKAKAAMLDAHDXARQKVANGQEAGQPGAXNMKELH.

The tract at residues 26–45 is disordered; that stretch reads KVANGQEAGQPGAXNMKELH.

Belongs to the CRISP family. Venom allergen 5-like subfamily. Contains 3 disulfide bonds. As to expression, expressed by the venom gland.

Its subcellular location is the secreted. The protein is Scolopendra 20417.15 Da toxin of Scolopendra viridicornis nigra (Brazilian giant centipede).